A 308-amino-acid polypeptide reads, in one-letter code: Methionyl-tRNA formyltransferase (308 aa).

110-113 (SLLP) contacts (6S)-5,6,7,8-tetrahydrofolate.

It belongs to the Fmt family.

It catalyses the reaction L-methionyl-tRNA(fMet) + (6R)-10-formyltetrahydrofolate = N-formyl-L-methionyl-tRNA(fMet) + (6S)-5,6,7,8-tetrahydrofolate + H(+). In terms of biological role, attaches a formyl group to the free amino group of methionyl-tRNA(fMet). The formyl group appears to play a dual role in the initiator identity of N-formylmethionyl-tRNA by promoting its recognition by IF2 and preventing the misappropriation of this tRNA by the elongation apparatus. The protein is Methionyl-tRNA formyltransferase of Neisseria meningitidis serogroup C (strain 053442).